The following is a 272-amino-acid chain: Tryptophan synthase alpha chain (272 aa).

Residues Glu-49 and Glu-60 each act as proton acceptor in the active site.

Belongs to the TrpA family. In terms of assembly, tetramer of two alpha and two beta chains.

It carries out the reaction (1S,2R)-1-C-(indol-3-yl)glycerol 3-phosphate + L-serine = D-glyceraldehyde 3-phosphate + L-tryptophan + H2O. The protein operates within amino-acid biosynthesis; L-tryptophan biosynthesis; L-tryptophan from chorismate: step 5/5. Functionally, the alpha subunit is responsible for the aldol cleavage of indoleglycerol phosphate to indole and glyceraldehyde 3-phosphate. The polypeptide is Tryptophan synthase alpha chain (Legionella pneumophila (strain Paris)).